Here is a 260-residue protein sequence, read N- to C-terminus: tRNA pseudouridine synthase C (260 aa).

The active site involves Asp54.

The protein belongs to the pseudouridine synthase RluA family.

The catalysed reaction is uridine(65) in tRNA = pseudouridine(65) in tRNA. Functionally, responsible for synthesis of pseudouridine from uracil-65 in transfer RNAs. The protein is tRNA pseudouridine synthase C (truC) of Escherichia coli (strain K12).